The sequence spans 33 residues: Photosystem II reaction center protein Psb30 (33 aa).

The chain crosses the membrane as a helical span at residues 5 to 25 (VIAQLTVLALIVASGPLVIAL).

It belongs to the Psb30/Ycf12 family. In terms of assembly, PSII is composed of 1 copy each of membrane proteins PsbA, PsbB, PsbC, PsbD, PsbE, PsbF, PsbH, PsbI, PsbJ, PsbK, PsbL, PsbM, PsbT, PsbX, PsbY, PsbZ, Psb30/Ycf12, peripheral proteins of the oxygen-evolving complex and a large number of cofactors. It forms dimeric complexes.

Its subcellular location is the plastid. The protein resides in the chloroplast thylakoid membrane. In terms of biological role, a core subunit of photosystem II (PSII), probably helps stabilize the reaction center. The polypeptide is Photosystem II reaction center protein Psb30 (Marchantia polymorpha (Common liverwort)).